The sequence spans 308 residues: Acyl transferase (308 aa).

Residues S116, D213, and H243 each act as charge relay system in the active site.

This sequence belongs to the LuxD family.

The protein operates within lipid metabolism; fatty acid reduction for biolumincescence. In terms of biological role, acyl transferase is part of the fatty acid reductase system required for aldehyde biosynthesis; it produces fatty acids for the luminescent reaction. This is Acyl transferase from Shewanella hanedai (Alteromonas hanedai).